The chain runs to 244 residues: 14-3-3 protein beta/alpha (244 aa).

Met-1 is subject to N-acetylmethionine.

Belongs to the 14-3-3 family. In terms of assembly, homodimer, and heterodimer with other family members.

The protein localises to the cytoplasm. Functionally, adapter protein implicated in the regulation of a large spectrum of both general and specialized signaling pathways. Binds to a large number of partners, usually by recognition of a phosphoserine or phosphothreonine motif. Binding generally results in the modulation of the activity of the binding partner. This chain is 14-3-3 protein beta/alpha (ywhab), found in Xenopus tropicalis (Western clawed frog).